Consider the following 459-residue polypeptide: MRNDPFQRLGLDREVLTVSQLNQRARLLLEDVFPQVWVEGELSNLARPASGHVYFTLKDSNAQIRCALFRQNALRVRQALRDGLAVKVRGKISLFEGRGDYQLIADTVEPAGDGALRLAFEALKEKLAGEGLFASERKRPLPAHPRRIGIVSSPSGAVIRDIISVFRRRAPQVELTLVPTAVQGREAVAQIVRALQLADRQGFDALILARGGGSLEDLWCFNEEAVARAVAACATPIVSAVGHETDVSISDFVADVRAPTPSAAAELLAPNAGDLQQRLDGLRRRLVLRMRDQLLRERLRLEGVARRLRHPGERLRQQAQRLDDLDMRLRRAFERHLAVRHERLVRLETRLAAQHPGRTLALLRQKLDSLAARLPRAAREVLKDRRQHLEGLAQTLNVVSPLATLGRGYSILLDERGRAIRDAGQTQPGQRLKARLAEGELEVRVEDNHRTPVTLSLLD.

Belongs to the XseA family. Heterooligomer composed of large and small subunits.

The protein localises to the cytoplasm. It catalyses the reaction Exonucleolytic cleavage in either 5'- to 3'- or 3'- to 5'-direction to yield nucleoside 5'-phosphates.. Functionally, bidirectionally degrades single-stranded DNA into large acid-insoluble oligonucleotides, which are then degraded further into small acid-soluble oligonucleotides. This chain is Exodeoxyribonuclease 7 large subunit, found in Pseudomonas aeruginosa (strain UCBPP-PA14).